The chain runs to 177 residues: Large ribosomal subunit protein uL6 (177 aa).

Position 44 is an N6-acetyllysine (lysine 44).

This sequence belongs to the universal ribosomal protein uL6 family. Part of the 50S ribosomal subunit.

Functionally, this protein binds to the 23S rRNA, and is important in its secondary structure. It is located near the subunit interface in the base of the L7/L12 stalk, and near the tRNA binding site of the peptidyltransferase center. The protein is Large ribosomal subunit protein uL6 of Shigella sonnei (strain Ss046).